Here is a 375-residue protein sequence, read N- to C-terminus: Trichodiene synthase (375 aa).

Belongs to the trichodiene synthase family.

The catalysed reaction is (2E,6E)-farnesyl diphosphate = trichodiene + diphosphate. The protein operates within sesquiterpene biosynthesis; trichothecene biosynthesis. TS is a member of the terpene cyclase group of enzymes. It catalyzes the isomerization and cyclization of farnesyl pyro-phosphate to form trichodiene, the first cyclic intermediate in the biosynthetic pathway for trichothecenes. It serves to branch trichothecene biosynthesis from the isoprenoid pathway. This chain is Trichodiene synthase (TRI5), found in Fusarium austroamericanum.